Reading from the N-terminus, the 328-residue chain is Serine protease 48 (328 aa).

The first 20 residues, 1–20, serve as a signal peptide directing secretion; the sequence is MGPAGCAFTLLLLLGISVCG. The Peptidase S1 domain maps to 28-267; it reads VVGGQDAAAG…YQKWINATIS (240 aa). The cysteines at positions 53 and 69 are disulfide-linked. Catalysis depends on charge relay system residues His-68 and Asp-114. 3 disulfide bridges follow: Cys-148/Cys-226, Cys-181/Cys-205, and Cys-216/Cys-244. The active-site Charge relay system is the Ser-220. The N-linked (GlcNAc...) asparagine glycan is linked to Asn-263.

This sequence belongs to the peptidase S1 family.

Its subcellular location is the secreted. This is Serine protease 48 (PRSS48) from Homo sapiens (Human).